A 213-amino-acid chain; its full sequence is NADH-quinone oxidoreductase subunit C (213 aa).

The protein belongs to the complex I 30 kDa subunit family. In terms of assembly, NDH-1 is composed of 14 different subunits. Subunits NuoB, C, D, E, F, and G constitute the peripheral sector of the complex.

The protein localises to the cell inner membrane. The catalysed reaction is a quinone + NADH + 5 H(+)(in) = a quinol + NAD(+) + 4 H(+)(out). In terms of biological role, NDH-1 shuttles electrons from NADH, via FMN and iron-sulfur (Fe-S) centers, to quinones in the respiratory chain. The immediate electron acceptor for the enzyme in this species is believed to be ubiquinone. Couples the redox reaction to proton translocation (for every two electrons transferred, four hydrogen ions are translocated across the cytoplasmic membrane), and thus conserves the redox energy in a proton gradient. This is NADH-quinone oxidoreductase subunit C from Rhodospirillum rubrum (strain ATCC 11170 / ATH 1.1.1 / DSM 467 / LMG 4362 / NCIMB 8255 / S1).